A 560-amino-acid chain; its full sequence is Protein AATF (560 aa).

Ala2 is modified (N-acetylalanine). Phosphoserine is present on residues Ser61 and Ser63. Residues 76-208 (TSRKAWNEDH…GDRNSEDDGV (133 aa)) form a disordered region. The span at 94-129 (SDEEISDEEGSGDEDSEGLGLEEYDEDDLGAAEEQE) shows a compositional bias: acidic residues. Ser150 and Ser155 each carry phosphoserine. A compositionally biased stretch (basic and acidic residues) spans 156-165 (DFEKFTKGMD). Acidic residues predominate over residues 168–195 (GSSEEEEDEESGMEEGDDAEDSQGESEE). Residues Ser203, Ser273, Ser316, Ser320, and Ser321 each carry the phosphoserine modification. The tract at residues 273 to 315 (SALKNSHKALKALLRSLVGLQEELLFQYPDTRYLVDGTKPNAG) is POLR2J binding. Residues 309 to 333 (GTKPNAGSEEISSEDDELVEEKKQQ) are disordered. Residues 316–372 (SEEISSEDDELVEEKKQQRRRVPAKRKLEMEDYPSFMAKRFADFTVYRNRTLQKWHD) are RB1 binding. The tract at residues 373–472 (KTKLASGKLG…FYHQLLRELI (100 aa)) is RB1 and SP1 binding.

Belongs to the AATF family. As to quaternary structure, part of the small subunit (SSU) processome, composed of more than 70 proteins and the RNA chaperone small nucleolar RNA (snoRNA) U3. Interacts with POLR2J, RB1/RB, RBL1/P107 and RBL2/P130. Interacts with PAWR and SP1. May also bind MAPT. Hyperphosphorylated during the G1/S phase transition. As to expression, ubiquitously expressed. Expressed at high levels in brain, heart, kidney, placenta and thymus.

It is found in the nucleus. The protein localises to the nucleolus. Its function is as follows. Part of the small subunit (SSU) processome, first precursor of the small eukaryotic ribosomal subunit. During the assembly of the SSU processome in the nucleolus, many ribosome biogenesis factors, an RNA chaperone and ribosomal proteins associate with the nascent pre-rRNA and work in concert to generate RNA folding, modifications, rearrangements and cleavage as well as targeted degradation of pre-ribosomal RNA by the RNA exosome. May function as a general inhibitor of the histone deacetylase HDAC1. Binding to the pocket region of RB1 may displace HDAC1 from RB1/E2F complexes, leading to activation of E2F target genes and cell cycle progression. Conversely, displacement of HDAC1 from SP1 bound to the CDKN1A promoter leads to increased expression of this CDK inhibitor and blocks cell cycle progression. Also antagonizes PAWR mediated induction of aberrant amyloid peptide production in Alzheimer disease (presenile and senile dementia), although the molecular basis for this phenomenon has not been described to date. This Homo sapiens (Human) protein is Protein AATF.